We begin with the raw amino-acid sequence, 225 residues long: Ribose-5-phosphate isomerase A (225 aa).

Residues Thr26–Thr29, Asp82–Asp85, and Lys95–Gly98 contribute to the substrate site. Residue Glu104 is the Proton acceptor of the active site. Lys122 is a binding site for substrate.

The protein belongs to the ribose 5-phosphate isomerase family. As to quaternary structure, homodimer.

The enzyme catalyses aldehydo-D-ribose 5-phosphate = D-ribulose 5-phosphate. Its pathway is carbohydrate degradation; pentose phosphate pathway; D-ribose 5-phosphate from D-ribulose 5-phosphate (non-oxidative stage): step 1/1. In terms of biological role, catalyzes the reversible conversion of ribose-5-phosphate to ribulose 5-phosphate. The sequence is that of Ribose-5-phosphate isomerase A from Streptococcus sanguinis (strain SK36).